Here is an 82-residue protein sequence, read N- to C-terminus: Chaplin-E (82 aa).

The signal sequence occupies residues 1-27; that stretch reads MKNLKKAAAVTMVAGGLIAAGAGMASA. Residues 41–81 enclose the Chaplin domain; that stretch reads SPGVASGNLVQAPIHIPVNAVGNSVNVIGVLNPAFGNLGVN.

It belongs to the chaplin family. Short chaplin subfamily.

The protein localises to the cell surface. The protein resides in the secreted. It is found in the cell wall. It localises to the fimbrium. Functionally, one of 8 partially redundant surface-active proteins required for efficient formation of aerial mycelium; the short chaplins assemble into a hydrophobic, amyloidal fibrillar surface layer that envelopes and protects aerial hyphae and spores, presumably anchored to the long chaplins. Chaplins have an overlapping function with the surface-active SapB peptide; chaplins are essential on minimal medium while on rich medium both chaplins and SapB are required for efficient aerial hyphae formation. Chaplins are also involved in cell attachment to a hydrophobic surface. Forms amyloid fibrils in vitro probably composed of stacked beta-sheets, at low extracellular concentrations individually restores the ability to form aerial hyphae to a chaplin-deficient strain, but does so less well than other short chaplins. A small chaplin extract (ChpD, ChpE, ChpF, ChpG and ChpH) self-assembles into 2 different amyloids; small fibrils at the air-water interface form an amphipathic membrane that resembles spore-surface structures involved in aerial hyphae formation, and hydrophilic fibrils in solution that resemble the fibers that attach cells to a hydrophobic surface. At the air-water interface the hydrophilic surface is in contact with water (probably equivalent to the peptidoglycan layer), while the hydrophobic face is exposed to the air, making the surface of the aerial hyphae hydrophobic. A minimal chaplin strain capable of forming aerial mycelium/hyphae on minimal medium contains ChpC, ChpE and ChpH. The strain also has restored rodlet formation on the hyphae surface. A second strain with ChpA, ChpD and ChpE makes slightly less robust hyphae. This essential chaplin may coordinate the assembly and/or polymerization of the other chaplins. A small chaplin extract applied to a chaplin-deficient strain restores aerial hyphae formation. The small chaplin extract forms an amyloid-like structure similar to that seen on the surface of cells without rodlets (rdlA-rdlB deletions), and is highly surface active, reducing surface tension from 72 to 26 mJ/m(2), which probably allows escape of hyphae from an aqueous environment into air. The chain is Chaplin-E from Streptomyces coelicolor (strain ATCC BAA-471 / A3(2) / M145).